A 210-amino-acid polypeptide reads, in one-letter code: Thiamine-phosphate synthase (210 aa).

4-amino-2-methyl-5-(diphosphooxymethyl)pyrimidine-binding positions include 39–43 (QLREK) and Asn-71. Residues Asp-72 and Asp-91 each contribute to the Mg(2+) site. Ser-110 lines the 4-amino-2-methyl-5-(diphosphooxymethyl)pyrimidine pocket. 134–136 (TPT) contributes to the 2-[(2R,5Z)-2-carboxy-4-methylthiazol-5(2H)-ylidene]ethyl phosphate binding site. Residue Lys-137 coordinates 4-amino-2-methyl-5-(diphosphooxymethyl)pyrimidine. Position 163 (Gly-163) interacts with 2-[(2R,5Z)-2-carboxy-4-methylthiazol-5(2H)-ylidene]ethyl phosphate.

The protein belongs to the thiamine-phosphate synthase family. Requires Mg(2+) as cofactor.

It carries out the reaction 2-[(2R,5Z)-2-carboxy-4-methylthiazol-5(2H)-ylidene]ethyl phosphate + 4-amino-2-methyl-5-(diphosphooxymethyl)pyrimidine + 2 H(+) = thiamine phosphate + CO2 + diphosphate. The enzyme catalyses 2-(2-carboxy-4-methylthiazol-5-yl)ethyl phosphate + 4-amino-2-methyl-5-(diphosphooxymethyl)pyrimidine + 2 H(+) = thiamine phosphate + CO2 + diphosphate. It catalyses the reaction 4-methyl-5-(2-phosphooxyethyl)-thiazole + 4-amino-2-methyl-5-(diphosphooxymethyl)pyrimidine + H(+) = thiamine phosphate + diphosphate. It functions in the pathway cofactor biosynthesis; thiamine diphosphate biosynthesis; thiamine phosphate from 4-amino-2-methyl-5-diphosphomethylpyrimidine and 4-methyl-5-(2-phosphoethyl)-thiazole: step 1/1. Condenses 4-methyl-5-(beta-hydroxyethyl)thiazole monophosphate (THZ-P) and 2-methyl-4-amino-5-hydroxymethyl pyrimidine pyrophosphate (HMP-PP) to form thiamine monophosphate (TMP). The sequence is that of Thiamine-phosphate synthase from Campylobacter jejuni subsp. jejuni serotype O:2 (strain ATCC 700819 / NCTC 11168).